Here is a 591-residue protein sequence, read N- to C-terminus: Calnexin (591 aa).

Positions 1 to 20 (MEGKWLLCLLLVLGTAAIQA) are cleaved as a signal peptide. At 21–482 (HDGHDDDMID…QMLEAAEERP (462 aa)) the chain is on the lumenal side. Ca(2+)-binding residues include S75 and D118. Position 138 is an N6-acetyllysine (K138). C161 and C195 are joined by a disulfide. 4 residues coordinate an alpha-D-glucoside: Y165, K167, Y186, and D193. A disordered region spans residues 261-347 (GNLLNDMTPP…EKPEDWDEDM (87 aa)). Basic and acidic residues predominate over residues 275-320 (REIEDPEDRKPEDWDERPKIADPDAVKPDDWDEDAPSKIPDEEATK). Residues 277–410 (IEDPEDRKPE…RKIPNPDFFE (134 aa)) form a p domain (Extended arm) region. 5 consecutive repeat copies span residues 279-291 (DPEDRKPEDWDER), 296-308 (DPDAVKPDDWDED), 315-327 (DEEATKPEGWLDD), 334-346 (DPDAEKPEDWDED), and 349-359 (GEWEAPQIANP). 4 X approximate repeats regions lie at residues 279–346 (DPED…WDED) and 349–406 (GEWE…IPNP). The span at 324–347 (WLDDEPEYIPDPDAEKPEDWDEDM) shows a compositional bias: acidic residues. An interaction with PPIB region spans residues 327-360 (DEPEYIPDPDAEKPEDWDEDMDGEWEAPQIANPK). C361 and C367 are disulfide-bonded. Repeat copies occupy residues 368 to 378 (GVWQRPMIDNP), 382 to 392 (GKWKPPMIDNP), and 396 to 406 (GIWKPRKIPNP). E426 lines the an alpha-D-glucoside pocket. A Ca(2+)-binding site is contributed by D437. Residues 483–503 (WLWVVYILTVALPVFLVILFC) traverse the membrane as a helical segment. 2 S-palmitoyl cysteine lipidation sites follow: C503 and C504. The Cytoplasmic portion of the chain corresponds to 504–591 (CSGKKQSNAM…SPRNRKPRRE (88 aa)). A sufficient to mediate interaction with SGIP1 region spans residues 504–591 (CSGKKQSNAM…SPRNRKPRRE (88 aa)). Positions 514 to 538 (EYKKTDAPQPDVKDEEGKEEEKNKG) are enriched in basic and acidic residues. The disordered stretch occupies residues 514 to 591 (EYKKTDAPQP…SPRNRKPRRE (78 aa)). S553 bears the Phosphoserine mark. Acidic residues predominate over residues 555 to 568 (AEEDGGTGSQDEED). Position 561 is a phosphothreonine (T561). At S563 the chain carries Phosphoserine; by MAPK3. S582 bears the Phosphoserine mark.

Belongs to the calreticulin family. Interacts with MAPK3/ERK1. Interacts with KCNH2. Associates with ribosomes. Interacts with SGIP1; involved in negative regulation of endocytosis. The palmitoylated form interacts with the ribosome-translocon complex component SSR1, promoting efficient folding of glycoproteins. Interacts with SERPINA2P/SERPINA2 and with the S and Z variants of SERPINA1. Interacts with PPIB. Interacts with ZNRF4. Interacts with SMIM22. Interacts with TMX2. Interacts with TMEM35A/NACHO and CHRNA7. Interacts with reticulophagy regulators RETREG2 and RETREG3. Interacts with DNM1L; may form part of a larger protein complex at the ER-mitochondrial interface during mitochondrial fission. Interacts with ADAM7. Post-translationally, phosphorylated at Ser-563 by MAPK3/ERK1. Phosphorylation by MAPK3/ERK1 increases its association with ribosomes. Palmitoylation by DHHC6 leads to the preferential localization to the perinuclear rough ER. It mediates the association of calnexin with the ribosome-translocon complex (RTC) which is required for efficient folding of glycosylated proteins. In terms of processing, ubiquitinated, leading to proteasomal degradation. Probably ubiquitinated by ZNRF4.

Its subcellular location is the endoplasmic reticulum membrane. It is found in the mitochondrion membrane. The protein localises to the melanosome membrane. Its function is as follows. Calcium-binding protein that interacts with newly synthesized monoglucosylated glycoproteins in the endoplasmic reticulum. It may act in assisting protein assembly and/or in the retention within the ER of unassembled protein subunits. It seems to play a major role in the quality control apparatus of the ER by the retention of incorrectly folded proteins. Associated with partial T-cell antigen receptor complexes that escape the ER of immature thymocytes, it may function as a signaling complex regulating thymocyte maturation. Additionally it may play a role in receptor-mediated endocytosis at the synapse. The polypeptide is Calnexin (Canx) (Rattus norvegicus (Rat)).